We begin with the raw amino-acid sequence, 646 residues long: Macrolide export ATP-binding/permease protein MacB (646 aa).

Positions 7–245 constitute an ABC transporter domain; sequence IRLEDICKTF…EATLQPHEEI (239 aa). 43–50 contributes to the ATP binding site; it reads GASGSGKS. 4 helical membrane-spanning segments follow: residues 274 to 294, 528 to 548, 572 to 592, and 609 to 629; these read VLTLLGIIIGVSSVVTMLAIG, VAAISLLVGGIGVMNIMLVSV, FIIEALSVSAIGGAIGVILGL, and FGPVLLAFACAFATGLIFGFL.

Belongs to the ABC transporter superfamily. Macrolide exporter (TC 3.A.1.122) family. Homodimer.

It is found in the cell inner membrane. Functionally, non-canonical ABC transporter that contains transmembrane domains (TMD), which form a pore in the inner membrane, and an ATP-binding domain (NBD), which is responsible for energy generation. Confers resistance against macrolides. The polypeptide is Macrolide export ATP-binding/permease protein MacB (Brucella abortus (strain 2308)).